Here is a 160-residue protein sequence, read N- to C-terminus: Transcription elongation factor GreB (160 aa).

The protein belongs to the GreA/GreB family. GreB subfamily.

Functionally, necessary for efficient RNA polymerase transcription elongation past template-encoded arresting sites. The arresting sites in DNA have the property of trapping a certain fraction of elongating RNA polymerases that pass through, resulting in locked ternary complexes. Cleavage of the nascent transcript by cleavage factors such as GreA or GreB allows the resumption of elongation from the new 3'terminus. GreB releases sequences of up to 9 nucleotides in length. The polypeptide is Transcription elongation factor GreB (Vibrio vulnificus (strain YJ016)).